The following is a 1038-amino-acid chain: Fibronectin-binding protein A (1038 aa).

A signal peptide spans 1–36; sequence MKNNLRYGIRKHKLGAASVFLGTMIVVGMGQDKEAA. The YSIRK-G/S signaling motif motif lies at 7-18; sequence YGIRKHKLGAAS. Positions 37–193 are disordered; sequence ASEQKTTTVE…VSEVKGTDVT (157 aa). The segment at 37–507 is ligand-binding A region; that stretch reads ASEQKTTTVE…SNKADGNGKN (471 aa). A compositionally biased stretch (polar residues) spans 39–92; sequence EQKTTTVEENGNSATDNKTSETQTTATNVNHIEETQSYNATVTEQPSNATQVTT. Residues 112–121 are compositionally biased toward basic and acidic residues; the sequence is TVKEEEKPQV. Positions 122–164 are enriched in polar residues; that stretch reads KETTQPQDNSGNQRQVDLTPKKVTQNQGTETQVEVAQPRTASE. Over residues 174-189 the composition is skewed to basic and acidic residues; that stretch reads DVAEAKEASDVSEVKG. Residues 189–507 form a fibrinogen/elastin/tropoelastin-binding region; the sequence is GTDVTSKVTV…SNKADGNGKN (319 aa). Residues 508 to 868 form a fibronectin-binding region; sequence GQIIQDNDFE…EGQQTIEEDT (361 aa). The B-1 repeat unit spans residues 541–570; the sequence is ENQDNTPLDIDYHTAIDGEGGYVDGYIETI. The 2 X approximate tandem repeats stretch occupies residues 541–600; sequence ENQDNTPLDIDYHTAIDGEGGYVDGYIETIEETDSSAIDIDYHTAVDSEVGHVGGYTESS. The stretch at 571–600 is one B-2 repeat; it reads EETDSSAIDIDYHTAVDSEVGHVGGYTESS. Disordered regions lie at residues 736-804, 825-976, and 989-1015; these read LGYE…GGNI, IEED…GKVV, and VAPT…NKGM. One copy of the D-1 repeat lies at 741-778; that stretch reads GQNSGNQSFEEDTEEDKPKYEQGGNIVDIDFDSVPQIH. A 4 X approximate tandem repeats region spans residues 741–898; that stretch reads GQNSGNQSFE…TPEVPSEPET (158 aa). The stretch at 779-816 is one D-2 repeat; the sequence is GQNKGDQSFEEDTEKDKPKYEHGGNIIDIDFDSVPQIH. Residues 817-855 form a D-3 repeat; sequence GFNKHNEIIEEDTNKDKPNYQFGGHNSVDFEEDTLPKVS. A compositionally biased stretch (basic and acidic residues) spans 825–834; that stretch reads IEEDTNKDKP. A D-4 repeat occupies 856–898; that stretch reads GQNEGQQTIEEDTTPPTPPTPEVPSEPETPMPPTPEVPSEPET. A compositionally biased stretch (pro residues) spans 870-958; sequence PPTPPTPEVP…PAEPGKPVPP (89 aa). 5 WR repeats span residues 899 to 912, 913 to 926, 927 to 940, 941 to 954, and 955 to 968; these read PTPP…EPET, PTPP…EPGK, and PVPP…KPSK. Positions 899–968 are 5 X tandem repeats, Pro-rich (WR); that stretch reads PTPPTPEVPS…AKEEPKKPSK (70 aa). An LPXTG sorting signal motif is present at residues 1002–1006; it reads LPETG. Threonine 1005 carries the pentaglycyl murein peptidoglycan amidated threonine modification. Positions 1006–1038 are cleaved as a propeptide — removed by sortase; it reads GGEESTNKGMLFGGLFSILGLALLRRNKKNNKA.

It is found in the secreted. It localises to the cell wall. Its function is as follows. Promotes bacterial attachment to multiple substrates, such as fibronectin (Fn), fibrinogen (Fg), elastin peptides and tropoelastin. This confers to S.aureus the ability to invade endothelial cells. Promotes adherence to and aggregation of activated platelets. The chain is Fibronectin-binding protein A (fnbA) from Staphylococcus aureus (strain Mu50 / ATCC 700699).